Consider the following 176-residue polypeptide: Siroheme decarboxylase alpha subunit (176 aa).

The interval 1–24 (MTEAHNACCHPSGTAAGHHGAGKA) is disordered. A compositionally biased stretch (low complexity) spans 12 to 24 (SGTAAGHHGAGKA).

This sequence belongs to the Ahb/Nir family. As to quaternary structure, forms a heterodimer composed of AhbA and AhbB. Also forms heterotetramers.

It catalyses the reaction siroheme + 2 H(+) = 12,18-didecarboxysiroheme + 2 CO2. It functions in the pathway porphyrin-containing compound metabolism; protoheme biosynthesis. Functionally, involved in siroheme-dependent heme b biosynthesis. Catalyzes the decarboxylation of siroheme into didecarboxysiroheme. This is Siroheme decarboxylase alpha subunit from Nitratidesulfovibrio vulgaris (strain ATCC 29579 / DSM 644 / CCUG 34227 / NCIMB 8303 / VKM B-1760 / Hildenborough) (Desulfovibrio vulgaris).